Consider the following 193-residue polypeptide: Ion-translocating oxidoreductase complex subunit A (193 aa).

The next 6 membrane-spanning stretches (helical) occupy residues 5-25 (LMLL…FLGL), 39-59 (IGMG…TWLI), 62-82 (FLLV…LVIA), 102-122 (VLGI…VALL), 134-154 (VLYG…FAGL), and 170-190 (APIS…FAGL).

This sequence belongs to the NqrDE/RnfAE family. The complex is composed of six subunits: RnfA, RnfB, RnfC, RnfD, RnfE and RnfG.

It is found in the cell inner membrane. In terms of biological role, part of a membrane-bound complex that couples electron transfer with translocation of ions across the membrane. This is Ion-translocating oxidoreductase complex subunit A from Azoarcus sp. (strain BH72).